Here is a 387-residue protein sequence, read N- to C-terminus: 1-deoxy-D-xylulose 5-phosphate reductoisomerase (387 aa).

Positions 10, 11, 12, 13, 36, 37, 38, and 123 each coordinate NADPH. Lysine 124 provides a ligand contact to 1-deoxy-D-xylulose 5-phosphate. Position 125 (glutamate 125) interacts with NADPH. Aspartate 149 contributes to the Mn(2+) binding site. Positions 150, 151, 175, and 198 each coordinate 1-deoxy-D-xylulose 5-phosphate. Glutamate 151 is a Mn(2+) binding site. Glycine 204 provides a ligand contact to NADPH. 1-deoxy-D-xylulose 5-phosphate is bound by residues serine 211, asparagine 216, lysine 217, and glutamate 220. Residue glutamate 220 participates in Mn(2+) binding.

Belongs to the DXR family. Requires Mg(2+) as cofactor. The cofactor is Mn(2+).

The catalysed reaction is 2-C-methyl-D-erythritol 4-phosphate + NADP(+) = 1-deoxy-D-xylulose 5-phosphate + NADPH + H(+). It participates in isoprenoid biosynthesis; isopentenyl diphosphate biosynthesis via DXP pathway; isopentenyl diphosphate from 1-deoxy-D-xylulose 5-phosphate: step 1/6. In terms of biological role, catalyzes the NADPH-dependent rearrangement and reduction of 1-deoxy-D-xylulose-5-phosphate (DXP) to 2-C-methyl-D-erythritol 4-phosphate (MEP). This is 1-deoxy-D-xylulose 5-phosphate reductoisomerase from Pelotomaculum thermopropionicum (strain DSM 13744 / JCM 10971 / SI).